We begin with the raw amino-acid sequence, 587 residues long: 2-succinyl-5-enolpyruvyl-6-hydroxy-3-cyclohexene-1-carboxylate synthase (587 aa).

This sequence belongs to the TPP enzyme family. MenD subfamily. Homodimer. Mg(2+) is required as a cofactor. Mn(2+) serves as cofactor. Requires thiamine diphosphate as cofactor.

The catalysed reaction is isochorismate + 2-oxoglutarate + H(+) = 5-enolpyruvoyl-6-hydroxy-2-succinyl-cyclohex-3-ene-1-carboxylate + CO2. It functions in the pathway quinol/quinone metabolism; 1,4-dihydroxy-2-naphthoate biosynthesis; 1,4-dihydroxy-2-naphthoate from chorismate: step 2/7. It participates in cofactor biosynthesis; phylloquinone biosynthesis. Functionally, catalyzes the thiamine diphosphate-dependent decarboxylation of 2-oxoglutarate and the subsequent addition of the resulting succinic semialdehyde-thiamine pyrophosphate anion to isochorismate to yield 2-succinyl-5-enolpyruvyl-6-hydroxy-3-cyclohexene-1-carboxylate (SEPHCHC). This Prochlorococcus marinus (strain MIT 9312) protein is 2-succinyl-5-enolpyruvyl-6-hydroxy-3-cyclohexene-1-carboxylate synthase.